The primary structure comprises 626 residues: MSPEEVKARGWKELDVILVTGDAYVDHSSFGTAIIGRVLEDAGFRVGIIAQPRWENPEDFKKLGKPRLFFSVSAGNTDSMVSNLTPGLKPRNKDAYSPGGKTGLRPNRAAIIYSNRIKEAFPDMPIVLGGIEASMRRFAHYDYLSDKVRQSILADAPADLVVYGMGELQIVEIAKRLQAGEDIKGIRDISGTVWKMEVKAWKELKGKGKEKAGEQDESENATEEVAKDKSLDPAEFFKEYVEIPSFSEVSQDKAVFAKAFRTYFLEQNPVTGKGIVQPHPKTIIIQNKPMRPLTEAELDHVYELPYTGETHPSYTEPVPALEMVKFSLTTHRGCFGGCSFCAITQHQGRMIASRSIESILREAKKLTQKPDFKGIINGVGGPTANMYGMECRSWEKKGACLDKACLYPRVCPALDTSHKKLLELMHRLRELPGVRHVFTGYGVRYDLALEDEEYLEELCAHHISGQLRIAPEHFSGRVTDAMSKPGKEVYEKFADRFNAFNKKCGKEQYIVNYLMSGHPGCTLKDMIEMAEYVRDHGGYTEQVQDFTPTPMTVSTCMYYTGLDPFTGKKMYVARDKKEKAMQRALMHYRNPANYELVYEALEKAGRLDLVGNAHKCLIRRKERQRK.

The interval 206–227 is disordered; it reads GKGKEKAGEQDESENATEEVAK. Residues 320–589 form the Radical SAM core domain; the sequence is ALEMVKFSLT…AMQRALMHYR (270 aa). Positions 334, 338, and 341 each coordinate [4Fe-4S] cluster.

This sequence belongs to the UPF0313 family. It depends on [4Fe-4S] cluster as a cofactor.

In Methanosarcina mazei (strain ATCC BAA-159 / DSM 3647 / Goe1 / Go1 / JCM 11833 / OCM 88) (Methanosarcina frisia), this protein is UPF0313 protein MM_1287.